Reading from the N-terminus, the 467-residue chain is Cytochrome c-552 (467 aa).

An N-terminal signal peptide occupies residues 1 to 27; that stretch reads MMKKMTGKSFALSALVAASFMAAGAMA. Position 87 (histidine 87) interacts with heme c. Heme is bound by residues cysteine 115, cysteine 118, and lysine 119. Cysteine 153, cysteine 156, histidine 157, cysteine 195, cysteine 198, and histidine 199 together coordinate heme c. Residues glutamate 201, tyrosine 202, lysine 250, and glutamine 252 each contribute to the Ca(2+) site. Tyrosine 202 lines the substrate pocket. Substrate is bound at residue histidine 253. 9 residues coordinate heme c: histidine 264, cysteine 271, cysteine 274, histidine 275, histidine 290, cysteine 303, cysteine 306, histidine 307, and histidine 382.

It belongs to the cytochrome c-552 family. Ca(2+) is required as a cofactor. The cofactor is heme c.

It localises to the periplasm. It carries out the reaction 6 Fe(III)-[cytochrome c] + NH4(+) + 2 H2O = 6 Fe(II)-[cytochrome c] + nitrite + 8 H(+). Its pathway is nitrogen metabolism; nitrate reduction (assimilation). In terms of biological role, catalyzes the reduction of nitrite to ammonia, consuming six electrons in the process. The polypeptide is Cytochrome c-552 (Shewanella sp. (strain MR-4)).